The sequence spans 914 residues: Dynamin-2A (914 aa).

Position 1 is an N-acetylmethionine (M1). A Dynamin-type G domain is found at 35–303; the sequence is PATFLNVVAL…IRSRMKLRLP (269 aa). The tract at residues 45–52 is G1 motif; it reads GNVGAGKS. 45–52 contributes to the GTP binding site; that stretch reads GNVGAGKS. The G2 motif stretch occupies residues 71–73; it reads ATR. The interval 143-146 is G3 motif; it reads DLPG. Residues 143-147 and 204-207 contribute to the GTP site; these read DLPGL and GKID. Residues 204–207 form a G4 motif region; sequence GKID. Residues 238 to 241 are G5 motif; that stretch reads AVIG. The span at 507–522 shows a compositional bias: basic and acidic residues; it reads RREEELKGRSSKKGQD. Disordered regions lie at residues 507–570 and 629–648; these read RREE…TAGP and PEDEVEKSKSSKDKKANGPD. Residues 523–535 are compositionally biased toward polar residues; the sequence is AEQSLLSRATSPQ. 2 stretches are compositionally biased toward basic and acidic residues: residues 547–560 and 634–645; these read SMKDKPSPQDKETP and EKSKSSKDKKAN. The PH domain occupies 572–696; the sequence is GEITAGYLMK…WINKLQKVIQ (125 aa). In terms of domain architecture, GED spans 730–823; that stretch reads LRWMSQEVRG…QLSIHDNRAA (94 aa). The stretch at 781–805 forms a coiled coil; it reads NERIESLIQEDQNVKRRRERYQKQS. Residues 821 to 914 are disordered; that stretch reads RAAAASSYSD…PPPTGSAYRY (94 aa). Composition is skewed to polar residues over residues 826–839 and 852–866; these read SSYSDNSGTESSPR and AFNSAANGPSDSLSK.

Belongs to the TRAFAC class dynamin-like GTPase superfamily. Dynamin/Fzo/YdjA family. In terms of assembly, binds PtdIns3P. Interacts with SH3P3 (via SH3 domain) and (via C-terminus) with GAMMA-ADR. May homooligomerize or heterooligomerize.

It localises to the cytoplasm. The protein localises to the cytosol. The protein resides in the golgi apparatus membrane. Its subcellular location is the cytoskeleton. It is found in the phragmoplast. It localises to the cytoplasmic vesicle. The protein localises to the clathrin-coated vesicle. The enzyme catalyses GTP + H2O = GDP + phosphate + H(+). Increased GTPase activity in the presence of phosphatidic acid. Functionally, microtubule-associated force-producing protein involved in clathrin-mediated vesicle trafficking from the trans-Golgi network to the central vacuole. Able to bind and hydrolyze GTP. Binds specifically to phosphatidylinositol 3-phosphate (PtdIns3P). This chain is Dynamin-2A (DRP2A), found in Arabidopsis thaliana (Mouse-ear cress).